The sequence spans 1327 residues: Polarized growth protein L1 (1327 aa).

Residues 1-30 form the signal peptide; sequence MRESFASLLATGAGKLALSLLFAATPFTSA. Residues 31–1169 lie on the Extracellular side of the membrane; it reads YTFNQVPSPN…FSQQNGKHLA (1139 aa). Residues N74, N90, N105, N115, N132, N170, N217, N224, N235, N318, N342, N452, N475, N601, N639, N648, and N691 are each glycosylated (N-linked (GlcNAc...) asparagine). Residues 595 to 641 form a Kelch 1 repeat; that stretch reads NLYVAGNFSNNDGRNNIFSFKQGASDPTALPNRGLNRQVMTLYQNDS. The stretch at 699 to 754 is one Kelch 2 repeat; that stretch reads QVLAVSGFFDSVNEFNGNPSTNVQDFAVWVPSRSNWLHNLDFFTLAMSGRLMTFAD. N-linked (GlcNAc...) asparagine glycans are attached at residues N835, N852, N877, and N931. Kelch repeat units lie at residues 945 to 993 and 994 to 1040; these read DVFV…ISDT and QMYI…TIAN. N-linked (GlcNAc...) asparagine glycans are attached at residues N1000, N1006, and N1126. A helical membrane pass occupies residues 1170-1190; that stretch reads LWAIVLIGLAIALVLTFLLVV. Residues 1191–1327 are Cytoplasmic-facing; that stretch reads AGILLEWYRN…VFDTILACSS (137 aa).

The protein belongs to the RAX2 family.

It is found in the cell membrane. Its function is as follows. Has been identified within the cluster that mediates the biosynthesis of squalestatin, but as its expression does not follow that of the other cluster members and it is not conserved in close related clusters, L1 seems not to be involved in the biosynthesis of squalestatin. Probably plays a role as a cell polarity regulator. This chain is Polarized growth protein L1, found in Phoma sp. (strain ATCC 20986 / MF5453).